A 250-amino-acid chain; its full sequence is Triosephosphate isomerase (250 aa).

Residue 9–11 coordinates substrate; the sequence is NWK. Catalysis depends on His96, which acts as the Electrophile. The active-site Proton acceptor is Glu168. Substrate-binding positions include Gly174, Ser216, and 237–238; that span reads GG.

Belongs to the triosephosphate isomerase family. In terms of assembly, homodimer.

It is found in the cytoplasm. It carries out the reaction D-glyceraldehyde 3-phosphate = dihydroxyacetone phosphate. The protein operates within carbohydrate biosynthesis; gluconeogenesis. It participates in carbohydrate degradation; glycolysis; D-glyceraldehyde 3-phosphate from glycerone phosphate: step 1/1. In terms of biological role, involved in the gluconeogenesis. Catalyzes stereospecifically the conversion of dihydroxyacetone phosphate (DHAP) to D-glyceraldehyde-3-phosphate (G3P). The sequence is that of Triosephosphate isomerase from Leptospira borgpetersenii serovar Hardjo-bovis (strain JB197).